The sequence spans 952 residues: Eukaryotic initiation factor 4F subunit p150 (952 aa).

Disordered regions lie at residues 1 to 77 (MTDE…NYNG), 115 to 389 (GSAP…DAGT), and 481 to 575 (VIPP…LVPS). Over residues 7–16 (HPTQSASKQE) the composition is skewed to polar residues. The segment covering 29-46 (ESQQQRGYTNYNNGSNYT) has biased composition (low complexity). Residues 47-56 (QKKPYNSNRP) show a composition bias toward polar residues. Positions 65-74 (GPNRYNNRGN) are enriched in low complexity. Positions 140–151 (SGEHLDLKEQHK) are enriched in basic and acidic residues. Positions 154–166 (LQSQERSTVSPQP) are enriched in polar residues. Residue Ser-163 is modified to Phosphoserine. The span at 175-191 (DSTSTSTPTPTPSTNDS) shows a compositional bias: low complexity. Thr-181 carries the phosphothreonine modification. Positions 188 to 299 (TNDSKASSEE…KEESTPKVLT (112 aa)) are interaction with PAB1. Phosphoserine is present on Ser-195. Residues 218-228 (AALEKKRKEQL) are compositionally biased toward basic and acidic residues. Over residues 229 to 244 (EGSSGNNNIPMKTTPE) the composition is skewed to polar residues. 3 stretches are compositionally biased toward basic and acidic residues: residues 246-276 (VEEK…KQET), 283-294 (QGEKGQIKEEST), and 309-333 (QQKE…ETKS). Positions 355–368 (TEQSNIDESATTPA) are enriched in polar residues. Ser-503 carries the phosphoserine modification. 2 stretches are compositionally biased toward basic and acidic residues: residues 504–521 (RGHD…DRAN) and 532–569 (RMND…KEEV). Residues 607-850 (ERKMKSLLNK…IDIKELRHDK (244 aa)) enclose the MIF4G domain. The segment at 870-952 (EEERQRQLKN…ALMGESDDEE (83 aa)) is disordered. Over residues 879 to 894 (NNSRSNSRRTNNSSNR) the composition is skewed to low complexity. Position 883 is a phosphoserine (Ser-883). Position 888 is a phosphothreonine (Thr-888). Phosphoserine occurs at positions 892, 896, 908, and 948. Over residues 908-922 (SFITTRTYSQRNSQR) the composition is skewed to polar residues.

It belongs to the eukaryotic initiation factor 4G family. Component of the eIF4F complex, which composition varies with external and internal environmental conditions. It is composed of at least eIF4A (TIF1/TIF2), eIF4E (TIF45) and eIF4G (TIF4631 or TIF4632). Interacts with PAT1 in a RNA-dependent manner.

The protein resides in the cytoplasm. It localises to the P-body. The protein localises to the stress granule. Its function is as follows. Component of the eIF4F complex, which interacts with the mRNA cap structure and serves as an initial point of assembly for the translation apparatus. Stimulates translation by interaction with polyadenylate-binding protein PAB1, bringing the 5'- and 3'-ends of the mRNA in proximity. The formation of this circular mRNP structure appears to be critical for the synergistic effects of the cap and the poly(A) tail in facilitating translation initiation, recycling of ribosomes, and mRNA stability. TIF4631 is probably essential when TIF4632 is missing. This chain is Eukaryotic initiation factor 4F subunit p150, found in Saccharomyces cerevisiae (strain ATCC 204508 / S288c) (Baker's yeast).